The following is an 831-amino-acid chain: Translation initiation factor IF-2 (831 aa).

One can recognise a tr-type G domain in the interval 329-499 (TRAPVVTVMG…LLIAEMQDLK (171 aa)). Residues 338-345 (GHVDHGKT) are G1. 338–345 (GHVDHGKT) contacts GTP. Residues 363–367 (GITQH) are G2. Residues 385-388 (DTPG) form a G3 region. GTP-binding positions include 385 to 389 (DTPGH) and 439 to 442 (NKID). The interval 439 to 442 (NKID) is G4. The interval 475–477 (SAL) is G5.

It belongs to the TRAFAC class translation factor GTPase superfamily. Classic translation factor GTPase family. IF-2 subfamily.

It is found in the cytoplasm. Functionally, one of the essential components for the initiation of protein synthesis. Protects formylmethionyl-tRNA from spontaneous hydrolysis and promotes its binding to the 30S ribosomal subunits. Also involved in the hydrolysis of GTP during the formation of the 70S ribosomal complex. The polypeptide is Translation initiation factor IF-2 (Rickettsia massiliae (strain Mtu5)).